A 302-amino-acid polypeptide reads, in one-letter code: Sulfate adenylyltransferase subunit 2 (302 aa).

This sequence belongs to the PAPS reductase family. CysD subfamily. Heterodimer composed of CysD, the smaller subunit, and CysN.

It carries out the reaction sulfate + ATP + H(+) = adenosine 5'-phosphosulfate + diphosphate. Its pathway is sulfur metabolism; hydrogen sulfide biosynthesis; sulfite from sulfate: step 1/3. Its function is as follows. With CysN forms the ATP sulfurylase (ATPS) that catalyzes the adenylation of sulfate producing adenosine 5'-phosphosulfate (APS) and diphosphate, the first enzymatic step in sulfur assimilation pathway. APS synthesis involves the formation of a high-energy phosphoric-sulfuric acid anhydride bond driven by GTP hydrolysis by CysN coupled to ATP hydrolysis by CysD. The chain is Sulfate adenylyltransferase subunit 2 from Aeromonas hydrophila subsp. hydrophila (strain ATCC 7966 / DSM 30187 / BCRC 13018 / CCUG 14551 / JCM 1027 / KCTC 2358 / NCIMB 9240 / NCTC 8049).